A 354-amino-acid chain; its full sequence is tRNA N6-adenosine threonylcarbamoyltransferase (354 aa).

Fe cation-binding residues include His-111 and His-115. Residues 134–138 (LVSGG), Asp-167, Gly-180, and Asn-279 each bind substrate. A Fe cation-binding site is contributed by Asp-319.

Belongs to the KAE1 / TsaD family. Fe(2+) is required as a cofactor.

Its subcellular location is the cytoplasm. The enzyme catalyses L-threonylcarbamoyladenylate + adenosine(37) in tRNA = N(6)-L-threonylcarbamoyladenosine(37) in tRNA + AMP + H(+). Its function is as follows. Required for the formation of a threonylcarbamoyl group on adenosine at position 37 (t(6)A37) in tRNAs that read codons beginning with adenine. Is involved in the transfer of the threonylcarbamoyl moiety of threonylcarbamoyl-AMP (TC-AMP) to the N6 group of A37, together with TsaE and TsaB. TsaD likely plays a direct catalytic role in this reaction. The polypeptide is tRNA N6-adenosine threonylcarbamoyltransferase (Neisseria gonorrhoeae (strain ATCC 700825 / FA 1090)).